The sequence spans 261 residues: INTITFDAGNATINKYATFMESLRNEAKDPSLKCYGIPMLPNTNSTIKYLLVKLQGASLKTITLMLRRNNLYVMGYSDPYDNKCRYHIFNDIKGTEYSDVENTLCPSSNPRVAKPINYNGLYPTLEKKAGVTSRNEVQLGIQILSSDIGKISGQGSFTEKIEAKFLLVAIQMVSEAARFKYIENQVKTNFNRDFSPNDKVLDLEENWGKISTAIHNSKNGALPKPLELKNADGTKWIVLRVDEIKPDVGLLNYVNGTCQAT.

2 disulfide bridges follow: Cys34–Cys258 and Cys84–Cys105. Glu175 is a catalytic residue.

It belongs to the ribosome-inactivating protein family. Type 1 RIP subfamily.

The catalysed reaction is Endohydrolysis of the N-glycosidic bond at one specific adenosine on the 28S rRNA.. In terms of biological role, inhibits viral infection of plants, and protein synthesis in vitro. In Phytolacca americana (American pokeweed), this protein is Antiviral protein S.